Consider the following 100-residue polypeptide: Acylphosphatase (100 aa).

An Acylphosphatase-like domain is found at 3–92 (RRSYSVIGRV…PLPDTFDIRF (90 aa)). Catalysis depends on residues Arg18 and Asn36. Residues 76-100 (DDPAHEGPLPDTFDIRFRAPGSASE) form a disordered region.

It belongs to the acylphosphatase family.

It carries out the reaction an acyl phosphate + H2O = a carboxylate + phosphate + H(+). This is Acylphosphatase (acyP) from Nitratidesulfovibrio vulgaris (strain ATCC 29579 / DSM 644 / CCUG 34227 / NCIMB 8303 / VKM B-1760 / Hildenborough) (Desulfovibrio vulgaris).